Consider the following 90-residue polypeptide: Small ribosomal subunit protein uS19 (90 aa).

It belongs to the universal ribosomal protein uS19 family.

Its function is as follows. Protein S19 forms a complex with S13 that binds strongly to the 16S ribosomal RNA. The sequence is that of Small ribosomal subunit protein uS19 from Hydrogenovibrio crunogenus (strain DSM 25203 / XCL-2) (Thiomicrospira crunogena).